A 232-amino-acid chain; its full sequence is Small ribosomal subunit protein uS2 (232 aa).

It belongs to the universal ribosomal protein uS2 family.

The protein is Small ribosomal subunit protein uS2 of Baumannia cicadellinicola subsp. Homalodisca coagulata.